A 308-amino-acid polypeptide reads, in one-letter code: Glycerol-3-phosphate dehydrogenase [NAD(P)+] (308 aa).

NADPH-binding residues include W13, R33, and K81. The sn-glycerol 3-phosphate site is built by K81 and G109. NADPH is bound at residue A113. Sn-glycerol 3-phosphate-binding residues include K163, D216, S226, R227, and N228. K163 (proton acceptor) is an active-site residue. Position 227 (R227) interacts with NADPH. NADPH is bound at residue E253.

It belongs to the NAD-dependent glycerol-3-phosphate dehydrogenase family.

The protein localises to the cytoplasm. It carries out the reaction sn-glycerol 3-phosphate + NAD(+) = dihydroxyacetone phosphate + NADH + H(+). It catalyses the reaction sn-glycerol 3-phosphate + NADP(+) = dihydroxyacetone phosphate + NADPH + H(+). The protein operates within membrane lipid metabolism; glycerophospholipid metabolism. Functionally, catalyzes the reduction of the glycolytic intermediate dihydroxyacetone phosphate (DHAP) to sn-glycerol 3-phosphate (G3P), the key precursor for phospholipid synthesis. The chain is Glycerol-3-phosphate dehydrogenase [NAD(P)+] from Thermosynechococcus vestitus (strain NIES-2133 / IAM M-273 / BP-1).